The chain runs to 320 residues: Phosphoribosylaminoimidazole-succinocarboxamide synthase (320 aa).

The tract at residues E283–T303 is disordered.

The protein belongs to the SAICAR synthetase family.

The enzyme catalyses 5-amino-1-(5-phospho-D-ribosyl)imidazole-4-carboxylate + L-aspartate + ATP = (2S)-2-[5-amino-1-(5-phospho-beta-D-ribosyl)imidazole-4-carboxamido]succinate + ADP + phosphate + 2 H(+). It participates in purine metabolism; IMP biosynthesis via de novo pathway; 5-amino-1-(5-phospho-D-ribosyl)imidazole-4-carboxamide from 5-amino-1-(5-phospho-D-ribosyl)imidazole-4-carboxylate: step 1/2. The protein is Phosphoribosylaminoimidazole-succinocarboxamide synthase of Rhodopirellula baltica (strain DSM 10527 / NCIMB 13988 / SH1).